The primary structure comprises 464 residues: Asparagine--tRNA ligase (464 aa).

This sequence belongs to the class-II aminoacyl-tRNA synthetase family. In terms of assembly, homodimer.

It localises to the cytoplasm. It catalyses the reaction tRNA(Asn) + L-asparagine + ATP = L-asparaginyl-tRNA(Asn) + AMP + diphosphate + H(+). The polypeptide is Asparagine--tRNA ligase (Xanthomonas campestris pv. campestris (strain 8004)).